A 642-amino-acid chain; its full sequence is MMPFAVTTQGAQQPAPAPKQFGISSPISLAAPKDTDRELTQKLIETLQPFGVFEEEEELQRRILILQKLNNLVKEWIREISESRNLPQAVIENVGGKIFTFGSYRLGVHTKGADIDALCVAPRHVDRNDFFTSFYDKLKLQEEVKDLRAVEEAFVPVIKLCFDGIEIDILFARLALQTIPEDLDLRDDSLLKNLDIRCIRSLNGCRVTDEILHLVPNIDSFRLTLRAIKLWAKCHNIYSNILGFLGGVSWAMLVARTCQLYPNAIASTLVRKFFLVFSEWEWPNPVLLKEPEERNLNLPVWDPRVNPSDRYHLMPIITPAYPQQNSTYNVSVSTRMVMIEEFKQGLAITHEILLNKAEWSKLFEAPSFFQKYKHYIVLLASAPTEKQHLEWVGLVESKIRILVGSLEKNEFITLAHVNPQSFPAPKETADKEEFRTMWVIGLVLKKPENSEILSIDLTYDIQSFTDTVYRQAINSKMFEMDMKIAAMHLRRKELHQLLPNHVLQKKETHLTESVRLTAVTDSSLLLSIDSENSMTAPSPTGTMKTGPLTGNPQGRNSPALAVMAASVTNIQFPDVSLQHVNPIESSGIALSESIPQIPSQPTISPPPKPTMTRVVSSTHLVNHPSRPSGNTATNIPNPILGV.

Residues 101–103, Thr-110, 114–116, Asp-168, Lys-229, Tyr-238, and 247–248 contribute to the ATP site; these read FGS, DID, and GV. 3 residues coordinate Mg(2+): Asp-114, Asp-116, and Asp-168. Disordered regions lie at residues 530 to 553 and 620 to 642; these read SENS…GNPQ and LVNH…ILGV. Polar residues predominate over residues 620 to 636; it reads LVNHPSRPSGNTATNIP.

Belongs to the poly(A) polymerase family. As to quaternary structure, interacts with GSG1. It depends on Mg(2+) as a cofactor. The cofactor is Mn(2+). Testis specific.

The protein localises to the cytoplasm. Its subcellular location is the nucleus. It carries out the reaction RNA(n) + ATP = RNA(n)-3'-adenine ribonucleotide + diphosphate. This chain is Poly(A) polymerase beta, found in Mus musculus (Mouse).